We begin with the raw amino-acid sequence, 362 residues long: NAD(P)H-quinone oxidoreductase subunit 1, chloroplastic (362 aa).

The next 8 membrane-spanning stretches (helical) occupy residues 29 to 49, 103 to 123, 128 to 148, 164 to 184, 202 to 222, 247 to 267, 303 to 323, and 335 to 355; these read ILPILTLLLGITIEVLVIVWL, IAVISVLLSFLVIPLGYHFVL, IGVFLWIAISSIAPIGLLMAG, AAQSISYEIPLTFCVLAISLL, FFGWNIWRQPIGFLVFLISSL, YSGIKYGLFYLVSYLNLLVSS, TMGIFITLTKAYLFLFISITI, and LLNLGWKFLLPISLGNLLLTT.

Belongs to the complex I subunit 1 family. As to quaternary structure, NDH is composed of at least 16 different subunits, 5 of which are encoded in the nucleus.

Its subcellular location is the plastid. The protein resides in the chloroplast thylakoid membrane. It carries out the reaction a plastoquinone + NADH + (n+1) H(+)(in) = a plastoquinol + NAD(+) + n H(+)(out). The enzyme catalyses a plastoquinone + NADPH + (n+1) H(+)(in) = a plastoquinol + NADP(+) + n H(+)(out). NDH shuttles electrons from NAD(P)H:plastoquinone, via FMN and iron-sulfur (Fe-S) centers, to quinones in the photosynthetic chain and possibly in a chloroplast respiratory chain. The immediate electron acceptor for the enzyme in this species is believed to be plastoquinone. Couples the redox reaction to proton translocation, and thus conserves the redox energy in a proton gradient. The chain is NAD(P)H-quinone oxidoreductase subunit 1, chloroplastic from Triticum aestivum (Wheat).